Here is a 488-residue protein sequence, read N- to C-terminus: Probable glycine dehydrogenase (decarboxylating) subunit 2 (488 aa).

K274 is modified (N6-(pyridoxal phosphate)lysine).

It belongs to the GcvP family. C-terminal subunit subfamily. In terms of assembly, the glycine cleavage system is composed of four proteins: P, T, L and H. In this organism, the P 'protein' is a heterodimer of two subunits. The cofactor is pyridoxal 5'-phosphate.

The catalysed reaction is N(6)-[(R)-lipoyl]-L-lysyl-[glycine-cleavage complex H protein] + glycine + H(+) = N(6)-[(R)-S(8)-aminomethyldihydrolipoyl]-L-lysyl-[glycine-cleavage complex H protein] + CO2. The glycine cleavage system catalyzes the degradation of glycine. The P protein binds the alpha-amino group of glycine through its pyridoxal phosphate cofactor; CO(2) is released and the remaining methylamine moiety is then transferred to the lipoamide cofactor of the H protein. This chain is Probable glycine dehydrogenase (decarboxylating) subunit 2, found in Listeria innocua serovar 6a (strain ATCC BAA-680 / CLIP 11262).